A 160-amino-acid chain; its full sequence is Cyclic di-GMP-binding protein Smlt4090 (160 aa).

Residues Lys-33, Lys-132, Arg-134, Asp-135, and Asp-160 each coordinate 3',3'-c-di-GMP.

It belongs to the YajQ family.

In terms of biological role, cyclic di-GMP effector that significantly contributes to virulence. Binds bis-(3',5')-cyclic diguanylate (cyclic di-GMP or c-di-GMP), an important bacterial second messenger that controls a wide range of cellular processes. In Stenotrophomonas maltophilia (strain K279a), this protein is Cyclic di-GMP-binding protein Smlt4090.